The chain runs to 154 residues: SsrA-binding protein (154 aa).

The segment at 134-154 (QREDLKRRAEDRDTQRELARF) is disordered.

It belongs to the SmpB family.

Its subcellular location is the cytoplasm. In terms of biological role, required for rescue of stalled ribosomes mediated by trans-translation. Binds to transfer-messenger RNA (tmRNA), required for stable association of tmRNA with ribosomes. tmRNA and SmpB together mimic tRNA shape, replacing the anticodon stem-loop with SmpB. tmRNA is encoded by the ssrA gene; the 2 termini fold to resemble tRNA(Ala) and it encodes a 'tag peptide', a short internal open reading frame. During trans-translation Ala-aminoacylated tmRNA acts like a tRNA, entering the A-site of stalled ribosomes, displacing the stalled mRNA. The ribosome then switches to translate the ORF on the tmRNA; the nascent peptide is terminated with the 'tag peptide' encoded by the tmRNA and targeted for degradation. The ribosome is freed to recommence translation, which seems to be the essential function of trans-translation. The chain is SsrA-binding protein from Nitratidesulfovibrio vulgaris (strain ATCC 29579 / DSM 644 / CCUG 34227 / NCIMB 8303 / VKM B-1760 / Hildenborough) (Desulfovibrio vulgaris).